We begin with the raw amino-acid sequence, 338 residues long: Phenylalanine--tRNA ligase alpha subunit (338 aa).

Residue Glu-253 participates in Mg(2+) binding.

It belongs to the class-II aminoacyl-tRNA synthetase family. Phe-tRNA synthetase alpha subunit type 1 subfamily. Tetramer of two alpha and two beta subunits. Mg(2+) is required as a cofactor.

Its subcellular location is the cytoplasm. It carries out the reaction tRNA(Phe) + L-phenylalanine + ATP = L-phenylalanyl-tRNA(Phe) + AMP + diphosphate + H(+). This is Phenylalanine--tRNA ligase alpha subunit from Legionella pneumophila (strain Paris).